A 213-amino-acid chain; its full sequence is Thymidylate kinase (213 aa).

7-14 serves as a coordination point for ATP; that stretch reads GMDGSGKT.

Belongs to the thymidylate kinase family.

It catalyses the reaction dTMP + ATP = dTDP + ADP. Phosphorylation of dTMP to form dTDP in both de novo and salvage pathways of dTTP synthesis. This chain is Thymidylate kinase, found in Mycoplasma capricolum subsp. capricolum (strain California kid / ATCC 27343 / NCTC 10154).